The primary structure comprises 500 residues: ADP,ATP carrier protein 5 (500 aa).

11 helical membrane-spanning segments follow: residues 21–41 (IYNY…CILF), 62–82 (IAGF…VIIY), 94–114 (IFYY…FVIY), 149–169 (YIVY…LLFW), 184–204 (FYTL…FLMM), 224–244 (ITLV…CCLL), 287–307 (LWLL…VEAV), 328–348 (LYIL…NNVM), 357–377 (AVIS…LIVF), 381–401 (ILSL…VSIG), and 469–489 (SISP…IYAV).

The protein belongs to the ADP/ATP translocase tlc family.

It is found in the cell membrane. Provides the rickettsial cell with host ATP in exchange for rickettsial ADP. This is an obligate exchange system. This energy acquiring activity is an important component of rickettsial parasitism. In Rickettsia bellii (strain RML369-C), this protein is ADP,ATP carrier protein 5 (tlcE).